We begin with the raw amino-acid sequence, 208 residues long: Cytochrome c oxidase assembly protein CtaG (208 aa).

The Cytoplasmic portion of the chain corresponds to 1-19 (MPDTQPNVSPNPIRRRGLG). The chain crosses the membrane as a helical; Signal-anchor for type II membrane protein span at residues 20-42 (RDATVASICGLVVALMVGASFAA). Residues 43 to 208 (VPFYNWFCRT…TAPDKRKGNL (166 aa)) lie on the Periplasmic side of the membrane.

Belongs to the COX11/CtaG family.

Its subcellular location is the cell inner membrane. Functionally, exerts its effect at some terminal stage of cytochrome c oxidase synthesis, probably by being involved in the insertion of the copper B into subunit I. The sequence is that of Cytochrome c oxidase assembly protein CtaG from Rhodopseudomonas palustris (strain HaA2).